A 68-amino-acid polypeptide reads, in one-letter code: UPF0434 protein BURPS668_0926 (68 aa).

It belongs to the UPF0434 family.

In Burkholderia pseudomallei (strain 668), this protein is UPF0434 protein BURPS668_0926.